Consider the following 312-residue polypeptide: tRNA-dihydrouridine(16) synthase (312 aa).

FMN-binding positions include 7 to 9 and Q68; that span reads PMQ. C98 functions as the Proton donor in the catalytic mechanism. Residues K139, 200–202, and 224–225 contribute to the FMN site; these read NGE and GR.

It belongs to the Dus family. DusC subfamily. FMN is required as a cofactor.

It carries out the reaction 5,6-dihydrouridine(16) in tRNA + NADP(+) = uridine(16) in tRNA + NADPH + H(+). It catalyses the reaction 5,6-dihydrouridine(16) in tRNA + NAD(+) = uridine(16) in tRNA + NADH + H(+). In terms of biological role, catalyzes the synthesis of 5,6-dihydrouridine (D), a modified base found in the D-loop of most tRNAs, via the reduction of the C5-C6 double bond in target uridines. Specifically modifies U16 in tRNAs. This is tRNA-dihydrouridine(16) synthase from Pasteurella multocida (strain Pm70).